A 178-amino-acid chain; its full sequence is Probable host range protein 2 (178 aa).

It belongs to the poxviridae C7 protein family.

Plays a role for multiplication of the virus in different cell types. In Yaba-like disease virus (YLDV), this protein is Probable host range protein 2.